Consider the following 292-residue polypeptide: UPF0282 protein MJ1629 (292 aa).

The protein belongs to the UPF0282 family.

The sequence is that of UPF0282 protein MJ1629 from Methanocaldococcus jannaschii (strain ATCC 43067 / DSM 2661 / JAL-1 / JCM 10045 / NBRC 100440) (Methanococcus jannaschii).